Reading from the N-terminus, the 110-residue chain is Iron-sulfur cluster assembly protein CyaY (110 aa).

This sequence belongs to the frataxin family.

Involved in iron-sulfur (Fe-S) cluster assembly. May act as a regulator of Fe-S biogenesis. This chain is Iron-sulfur cluster assembly protein CyaY, found in Pseudomonas putida (strain ATCC 700007 / DSM 6899 / JCM 31910 / BCRC 17059 / LMG 24140 / F1).